Reading from the N-terminus, the 1036-residue chain is Zinc finger protein 532 (1036 aa).

Disordered stretches follow at residues 26–92 (PKAA…LHNG), 106–206 (GAKS…EAES), 220–265 (RKAE…PSSK), and 281–362 (AASD…KVRI). Residues 32–52 (SGHDDHESHIKQNAHVDDDSH) are compositionally biased toward basic and acidic residues. Phosphoserine occurs at positions 130, 133, and 134. Positions 136–151 (EEFEDDEKIEVDDPPD) are enriched in acidic residues. Lysine 175 carries the post-translational modification N6-acetyllysine. Polar residues predominate over residues 182 to 193 (ENSSKTGVSTSG). 2 stretches are compositionally biased toward basic and acidic residues: residues 194–205 (HTDKNKVKREAE) and 220–249 (RKAEDKLKENSEKMLESRVLDGKPSSEKSD). The span at 253 to 265 (AAAASSKTKPSSK) shows a compositional bias: low complexity. Over residues 302–314 (EVNDSPKAADKSP) the composition is skewed to basic and acidic residues. Phosphoserine occurs at positions 306 and 313. Low complexity predominate over residues 336 to 353 (SVSSENSSKGSPSSPVGS). Position 433 is a phosphoserine (serine 433). Residues lysine 458 and lysine 515 each participate in a glycyl lysine isopeptide (Lys-Gly) (interchain with G-Cter in SUMO2) cross-link. The C2H2-type 1; degenerate zinc-finger motif lies at 615–634 (YKCLECGDAFALEKSLSQHY). The C2H2-type 2; degenerate zinc finger occupies 751–775 (LKCLECNEVFQDEPSLATHFQHAAD). The segment at 784 to 807 (HPCRQCDKSFSSSHSLCRHNRIKH) adopts a C2H2-type 3 zinc-finger fold. Residues 814-840 (YACSHCPDSRRTFTKRLMLERHIQLMH) form a C2H2-type 4; degenerate zinc finger. The interval 847–877 (VKELSDDAGDVTNDEEEEAEIKEDAKVPSPK) is disordered. Positions 852 to 867 (DDAGDVTNDEEEEAEI) are enriched in acidic residues. Positions 868 to 877 (KEDAKVPSPK) are enriched in basic and acidic residues. Serine 875 bears the Phosphoserine mark. Residues lysine 879 and lysine 902 each participate in a glycyl lysine isopeptide (Lys-Gly) (interchain with G-Cter in SUMO2) cross-link. 2 C2H2-type zinc fingers span residues 938–961 (HQCRECGLCYTSHGSLARHLFIVH) and 999–1021 (RKCKVCAKTFETEAALNTHMRTH). Residues 966–1000 (PQPVSKQNGAGEDSQQENKPSPEDEAAEGAASDRK) are disordered.

It belongs to the krueppel C2H2-type zinc-finger protein family.

The protein resides in the nucleus. Functionally, may be involved in transcriptional regulation. In Mus musculus (Mouse), this protein is Zinc finger protein 532 (Znf532).